Consider the following 136-residue polypeptide: Small ribosomal subunit protein uS19 (136 aa).

This sequence belongs to the universal ribosomal protein uS19 family.

Functionally, protein S19 forms a complex with S13 that binds strongly to the 16S ribosomal RNA. This chain is Small ribosomal subunit protein uS19, found in Methanocorpusculum labreanum (strain ATCC 43576 / DSM 4855 / Z).